Consider the following 547-residue polypeptide: Intercellular adhesion molecule 3 (547 aa).

The N-terminal stretch at 1 to 29 (MATMVPSVLWPRACWTLLVCCLLTPGVQG) is a signal peptide. Topologically, residues 30–485 (QEFLLRVEPQ…VMDIEAGSSH (456 aa)) are extracellular. One can recognise an Ig-like C2-type 1 domain in the interval 46–103 (GGSLFVNCSTDCPSSEKIALETSLSKELVASGMGWAAFNLSNVTGNSRILCSVYCNGS). Residues Asn52, Asn84, Asn87, Asn101, Asn110, and Asn134 are each glycosylated (N-linked (GlcNAc...) asparagine). 2 disulfide bridges follow: Cys53-Cys96 and Cys57-Cys100. The region spanning 132-197 (GQNFTLRCQV…FSCRTELDMQ (66 aa)) is the Ig-like C2-type 2 domain. An intrachain disulfide couples Cys139 to Cys190. Residues Asn206, Asn264, Asn295, Asn308, Asn320, Asn363, Asn389, Asn453, and Asn457 are each glycosylated (N-linked (GlcNAc...) asparagine). The Ig-like C2-type 3 domain occupies 234-301 (ETSWPVDCTL…IVCNVTLGGE (68 aa)). Cys241 and Cys294 form a disulfide bridge. In terms of domain architecture, Ig-like C2-type 4 spans 329 to 382 (GSTVTVSCMAGARVQVTLDGVPAAAPGQPAQLQLNATESDDRRSFFCSATLEVD). Cys336 and Cys375 are disulfide-bonded. Residues 416-469 (KTTHVLQCQARGNPYPELRCLKEGSSREVPVGIPFFVNVTHNGTYQCQASSSRG) form the Ig-like C2-type 5 domain. A disulfide bond links Cys423 and Cys462. The helical transmembrane segment at 486 to 510 (FVPVFVAVLLTLGVVTIVLALMYVF) threads the bilayer. At 511-547 (REHKRSGSYHVREESTYLPLTSMQPTQAMGEEPSRAE) the chain is on the cytoplasmic side.

Belongs to the immunoglobulin superfamily. ICAM family. Interacts with moesin/MSN. In terms of processing, upon stimulation by a physiologic stimuli becomes rapidly and transiently phosphorylated on serine residues. Leukocytes.

It localises to the membrane. Functionally, ICAM proteins are ligands for the leukocyte adhesion protein LFA-1 (integrin alpha-L/beta-2). ICAM3 is also a ligand for integrin alpha-D/beta-2. In association with integrin alpha-L/beta-2, contributes to apoptotic neutrophil phagocytosis by macrophages. This chain is Intercellular adhesion molecule 3 (ICAM3), found in Pan troglodytes (Chimpanzee).